Consider the following 137-residue polypeptide: Ribosome-binding factor A (137 aa).

The tract at residues 112 to 137 (KKDEVKEDESHEDESTDHTEETNEEP) is disordered. Residues 127–137 (TDHTEETNEEP) show a composition bias toward basic and acidic residues.

This sequence belongs to the RbfA family. Monomer. Binds 30S ribosomal subunits, but not 50S ribosomal subunits or 70S ribosomes.

The protein localises to the cytoplasm. Its function is as follows. One of several proteins that assist in the late maturation steps of the functional core of the 30S ribosomal subunit. Associates with free 30S ribosomal subunits (but not with 30S subunits that are part of 70S ribosomes or polysomes). Required for efficient processing of 16S rRNA. May interact with the 5'-terminal helix region of 16S rRNA. The chain is Ribosome-binding factor A from Coprothermobacter proteolyticus (strain ATCC 35245 / DSM 5265 / OCM 4 / BT).